Consider the following 103-residue polypeptide: Cytochrome c-552 (103 aa).

Positions Met-1–Ala-22 are cleaved as a signal peptide. Heme c contacts are provided by Cys-32, Cys-35, His-36, and Met-81.

As to quaternary structure, monomer. Post-translationally, binds 1 heme c group covalently per subunit.

It localises to the periplasm. Monoheme c-type cytochrome. Probable electron donor to membrane cytochrome oxidase and to periplasmic nitrite reductase. This is Cytochrome c-552 (cyt) from Nitrosomonas europaea (strain ATCC 19718 / CIP 103999 / KCTC 2705 / NBRC 14298).